The chain runs to 221 residues: Ribosomal RNA large subunit methyltransferase E (221 aa).

G60, W62, D89, D105, and D134 together coordinate S-adenosyl-L-methionine. K174 acts as the Proton acceptor in catalysis. A disordered region spans residues 199-221 (KPKASRDKSSETFLLGRQLKHPG).

Belongs to the class I-like SAM-binding methyltransferase superfamily. RNA methyltransferase RlmE family.

It is found in the cytoplasm. The enzyme catalyses uridine(2552) in 23S rRNA + S-adenosyl-L-methionine = 2'-O-methyluridine(2552) in 23S rRNA + S-adenosyl-L-homocysteine + H(+). Its function is as follows. Specifically methylates the uridine in position 2552 of 23S rRNA at the 2'-O position of the ribose in the fully assembled 50S ribosomal subunit. This chain is Ribosomal RNA large subunit methyltransferase E, found in Ralstonia nicotianae (strain ATCC BAA-1114 / GMI1000) (Ralstonia solanacearum).